The following is a 114-amino-acid chain: Small ribosomal subunit protein bS6 (114 aa).

Belongs to the bacterial ribosomal protein bS6 family.

Its function is as follows. Binds together with bS18 to 16S ribosomal RNA. The protein is Small ribosomal subunit protein bS6 of Protochlamydia amoebophila (strain UWE25).